Consider the following 1208-residue polypeptide: DNA-directed RNA polymerase subunit beta (1208 aa).

It belongs to the RNA polymerase beta chain family. In terms of assembly, the RNAP catalytic core consists of 2 alpha, 1 beta, 1 beta' and 1 omega subunit. When a sigma factor is associated with the core the holoenzyme is formed, which can initiate transcription.

The enzyme catalyses RNA(n) + a ribonucleoside 5'-triphosphate = RNA(n+1) + diphosphate. Functionally, DNA-dependent RNA polymerase catalyzes the transcription of DNA into RNA using the four ribonucleoside triphosphates as substrates. The protein is DNA-directed RNA polymerase subunit beta of Enterococcus faecium (Streptococcus faecium).